The chain runs to 113 residues: Large ribosomal subunit protein uL22 (113 aa).

Belongs to the universal ribosomal protein uL22 family. Part of the 50S ribosomal subunit.

This protein binds specifically to 23S rRNA; its binding is stimulated by other ribosomal proteins, e.g. L4, L17, and L20. It is important during the early stages of 50S assembly. It makes multiple contacts with different domains of the 23S rRNA in the assembled 50S subunit and ribosome. Its function is as follows. The globular domain of the protein is located near the polypeptide exit tunnel on the outside of the subunit, while an extended beta-hairpin is found that lines the wall of the exit tunnel in the center of the 70S ribosome. The sequence is that of Large ribosomal subunit protein uL22 from Oceanobacillus iheyensis (strain DSM 14371 / CIP 107618 / JCM 11309 / KCTC 3954 / HTE831).